A 390-amino-acid polypeptide reads, in one-letter code: Acetylornithine aminotransferase (390 aa).

Residues 105-106 (GA) and Phe132 contribute to the pyridoxal 5'-phosphate site. Arg135 lines the N(2)-acetyl-L-ornithine pocket. Position 217–220 (217–220 (DEVQ)) interacts with pyridoxal 5'-phosphate. The residue at position 246 (Lys246) is an N6-(pyridoxal phosphate)lysine. A N(2)-acetyl-L-ornithine-binding site is contributed by Ser274. Thr275 is a pyridoxal 5'-phosphate binding site.

The protein belongs to the class-III pyridoxal-phosphate-dependent aminotransferase family. ArgD subfamily. In terms of assembly, homodimer. Pyridoxal 5'-phosphate is required as a cofactor.

The protein resides in the cytoplasm. It catalyses the reaction N(2)-acetyl-L-ornithine + 2-oxoglutarate = N-acetyl-L-glutamate 5-semialdehyde + L-glutamate. It participates in amino-acid biosynthesis; L-arginine biosynthesis; N(2)-acetyl-L-ornithine from L-glutamate: step 4/4. The sequence is that of Acetylornithine aminotransferase from Methanothermobacter thermautotrophicus (strain ATCC 29096 / DSM 1053 / JCM 10044 / NBRC 100330 / Delta H) (Methanobacterium thermoautotrophicum).